A 228-amino-acid chain; its full sequence is Auxin-responsive protein IAA14 (228 aa).

The short motif at 8 to 12 (LCLGL) is the EAR-like (transcriptional repression) element. The PB1 domain occupies 110–210 (VAFVKVSMDG…SCKRLRIMKG (101 aa)).

This sequence belongs to the Aux/IAA family. Homodimers and heterodimers. Interacts with TPL. Preferentially expressed in roots and flowers.

The protein resides in the nucleus. Its function is as follows. Aux/IAA proteins are short-lived transcriptional factors that function as repressors of early auxin response genes at low auxin concentrations. Repression is thought to result from the interaction with auxin response factors (ARFs), proteins that bind to the auxin-responsive promoter element (AuxRE). Formation of heterodimers with ARF proteins may alter their ability to modulate early auxin response genes expression. This Arabidopsis thaliana (Mouse-ear cress) protein is Auxin-responsive protein IAA14 (IAA14).